We begin with the raw amino-acid sequence, 311 residues long: Glycerol-3-phosphate dehydrogenase [NAD(P)+] (311 aa).

NADPH contacts are provided by tryptophan 11, arginine 30, arginine 31, and lysine 95. 3 residues coordinate sn-glycerol 3-phosphate: lysine 95, glycine 123, and serine 125. Alanine 127 contacts NADPH. The sn-glycerol 3-phosphate site is built by lysine 177, aspartate 230, serine 240, arginine 241, and asparagine 242. Lysine 177 functions as the Proton acceptor in the catalytic mechanism. Residue arginine 241 coordinates NADPH. NADPH is bound by residues valine 265 and glutamate 267.

This sequence belongs to the NAD-dependent glycerol-3-phosphate dehydrogenase family.

Its subcellular location is the cytoplasm. The enzyme catalyses sn-glycerol 3-phosphate + NAD(+) = dihydroxyacetone phosphate + NADH + H(+). The catalysed reaction is sn-glycerol 3-phosphate + NADP(+) = dihydroxyacetone phosphate + NADPH + H(+). Its pathway is membrane lipid metabolism; glycerophospholipid metabolism. Catalyzes the reduction of the glycolytic intermediate dihydroxyacetone phosphate (DHAP) to sn-glycerol 3-phosphate (G3P), the key precursor for phospholipid synthesis. The protein is Glycerol-3-phosphate dehydrogenase [NAD(P)+] of Bartonella bacilliformis (strain ATCC 35685 / KC583 / Herrer 020/F12,63).